A 515-amino-acid polypeptide reads, in one-letter code: NADH-quinone oxidoreductase subunit N (515 aa).

Helical transmembrane passes span 14–34 (ITPI…EAFL), 40–60 (WSAQ…ALAL), 80–100 (APTL…ILLI), 138–158 (TEVF…CAAN), 160–180 (LLTM…MCGL), 195–215 (YFLL…LLYG), 239–259 (LFAG…VGPF), 271–291 (PTAV…GGIL), 307–327 (GVLY…GLTQ), 333–353 (MIAY…IALT), 361–381 (MFYL…ISLV), 404–424 (VAWV…TSGF), 438–458 (GMAP…FFYL), and 485–505 (AAIT…SLAL).

The protein belongs to the complex I subunit 2 family. As to quaternary structure, NDH-1 is composed of 14 different subunits. Subunits NuoA, H, J, K, L, M, N constitute the membrane sector of the complex.

It is found in the cell membrane. It catalyses the reaction a quinone + NADH + 5 H(+)(in) = a quinol + NAD(+) + 4 H(+)(out). Functionally, NDH-1 shuttles electrons from NADH, via FMN and iron-sulfur (Fe-S) centers, to quinones in the respiratory chain. The immediate electron acceptor for the enzyme in this species is believed to be a menaquinone. Couples the redox reaction to proton translocation (for every two electrons transferred, four hydrogen ions are translocated across the cytoplasmic membrane), and thus conserves the redox energy in a proton gradient. The polypeptide is NADH-quinone oxidoreductase subunit N (Saccharopolyspora erythraea (strain ATCC 11635 / DSM 40517 / JCM 4748 / NBRC 13426 / NCIMB 8594 / NRRL 2338)).